The following is a 92-amino-acid chain: Kappa-scoloptoxin(15)-Ssd2a (92 aa).

The first 20 residues, 1-20, serve as a signal peptide directing secretion; that stretch reads MKMVYLGLFLIITSCVISSG.

Contains 3 disulfide bonds. Expressed by the venom gland.

The protein localises to the secreted. In terms of biological role, inhibits voltage-gated potassium channels (Kv) (IC(50)=about 10 nM), when tested on DRG neurons. The sequence is that of Kappa-scoloptoxin(15)-Ssd2a from Scolopendra dehaani (Thai centipede).